Consider the following 190-residue polypeptide: Nucleoside triphosphate pyrophosphatase (190 aa).

The active-site Proton acceptor is aspartate 69.

This sequence belongs to the Maf family. Requires a divalent metal cation as cofactor.

The protein localises to the cytoplasm. The enzyme catalyses a ribonucleoside 5'-triphosphate + H2O = a ribonucleoside 5'-phosphate + diphosphate + H(+). It catalyses the reaction a 2'-deoxyribonucleoside 5'-triphosphate + H2O = a 2'-deoxyribonucleoside 5'-phosphate + diphosphate + H(+). Nucleoside triphosphate pyrophosphatase. May have a dual role in cell division arrest and in preventing the incorporation of modified nucleotides into cellular nucleic acids. This is Nucleoside triphosphate pyrophosphatase from Helicobacter pylori (strain Shi470).